The primary structure comprises 336 residues: USG-1 protein homolog (336 aa).

This sequence belongs to the aspartate-semialdehyde dehydrogenase family.

In Azotobacter vinelandii, this protein is USG-1 protein homolog (usg).